The chain runs to 388 residues: 5-hydroxytryptamine receptor 4 (388 aa).

Residues 1–19 (MDKLDANVSSKEGFGSVEK) lie on the Extracellular side of the membrane. Asn7 is a glycosylation site (N-linked (GlcNAc...) asparagine). The chain crosses the membrane as a helical span at residues 20–44 (VVLLTFLSAVILMAILGNLLVMVAV). Over 45–54 (CRDRQLRKIK) the chain is Cytoplasmic. A helical transmembrane segment spans residues 55–78 (TNYFIVSLAFADLLVSVLVMPFGA). Residues 79-92 (IELVQDIWVYGEMF) are Extracellular-facing. Residues 93–117 (CLVRTSLDVLLTTASIFHLCCISLD) traverse the membrane as a helical segment. A disulfide bridge links Cys93 with Cys184. Residue Asp100 coordinates serotonin. The Cytoplasmic segment spans residues 118 to 133 (RYYAICCQPLVYRNKM). The chain crosses the membrane as a helical span at residues 134 to 157 (TPLRIALMLGGCWVIPMFISFLPI). At 158-188 (MQGWNNIGIVDLIEKRKFNQNSNSTYCVFMV) the chain is on the extracellular side. Residues 189–212 (NKPYAITCSVVAFYIPFLLMVLAY) traverse the membrane as a helical segment. The Cytoplasmic portion of the chain corresponds to 213-257 (YRIYVTAKEHARQIQVLQRAGAPAEGRPQPADQHSTHRMRTETKA). The helical transmembrane segment at 258–283 (AKTLCIIMGCFCLCWAPFFVTNIVDP) threads the bilayer. Asn279 contributes to the serotonin binding site. The Extracellular segment spans residues 284 to 290 (FIDYTVP). A helical transmembrane segment spans residues 291-314 (GQLWTAFLWLGYINSGLNPFLYAF). The Cytoplasmic segment spans residues 315-388 (LNKSFRRAFL…PLVAAQPIDT (74 aa)).

This sequence belongs to the G-protein coupled receptor 1 family. In terms of assembly, interacts (via C-terminus 330-346 AA) with GRK5; this interaction is promoted by 5-HT (serotonin).

The protein localises to the cell membrane. The protein resides in the endosome membrane. In terms of biological role, G-protein coupled receptor for 5-hydroxytryptamine (serotonin), a biogenic hormone that functions as a neurotransmitter, a hormone and a mitogen. Ligand binding causes a conformation change that triggers signaling via guanine nucleotide-binding proteins (G proteins) and modulates the activity of downstream effectors. HTR4 is coupled to G(s) G alpha proteins and mediates activation of adenylate cyclase activity. The polypeptide is 5-hydroxytryptamine receptor 4 (HTR4) (Cavia porcellus (Guinea pig)).